A 258-amino-acid polypeptide reads, in one-letter code: 5-oxoprolinase subunit A 2 (258 aa).

Belongs to the LamB/PxpA family. Forms a complex composed of PxpA, PxpB and PxpC.

The enzyme catalyses 5-oxo-L-proline + ATP + 2 H2O = L-glutamate + ADP + phosphate + H(+). Its function is as follows. Catalyzes the cleavage of 5-oxoproline to form L-glutamate coupled to the hydrolysis of ATP to ADP and inorganic phosphate. In Pseudomonas putida (strain ATCC 47054 / DSM 6125 / CFBP 8728 / NCIMB 11950 / KT2440), this protein is 5-oxoprolinase subunit A 2.